Reading from the N-terminus, the 307-residue chain is Serine/threonine-protein phosphatase PP2A-2 catalytic subunit (307 aa).

Mn(2+)-binding residues include D55, H57, D83, and N115. The active-site Proton donor is H116. 2 residues coordinate Mn(2+): H165 and H239.

Belongs to the PPP phosphatase family. PP-2A subfamily. Mn(2+) serves as cofactor.

The protein resides in the cytoplasm. It carries out the reaction O-phospho-L-seryl-[protein] + H2O = L-seryl-[protein] + phosphate. The catalysed reaction is O-phospho-L-threonyl-[protein] + H2O = L-threonyl-[protein] + phosphate. This is Serine/threonine-protein phosphatase PP2A-2 catalytic subunit (PP2A2) from Oryza sativa subsp. indica (Rice).